A 359-amino-acid chain; its full sequence is UDP-3-O-acylglucosamine N-acyltransferase (359 aa).

The active-site Proton acceptor is His256.

This sequence belongs to the transferase hexapeptide repeat family. LpxD subfamily. In terms of assembly, homotrimer.

The enzyme catalyses a UDP-3-O-[(3R)-3-hydroxyacyl]-alpha-D-glucosamine + a (3R)-hydroxyacyl-[ACP] = a UDP-2-N,3-O-bis[(3R)-3-hydroxyacyl]-alpha-D-glucosamine + holo-[ACP] + H(+). It functions in the pathway bacterial outer membrane biogenesis; LPS lipid A biosynthesis. Catalyzes the N-acylation of UDP-3-O-acylglucosamine using 3-hydroxyacyl-ACP as the acyl donor. Is involved in the biosynthesis of lipid A, a phosphorylated glycolipid that anchors the lipopolysaccharide to the outer membrane of the cell. The polypeptide is UDP-3-O-acylglucosamine N-acyltransferase (Rhodopseudomonas palustris (strain HaA2)).